We begin with the raw amino-acid sequence, 235 residues long: Orotidine 5'-phosphate decarboxylase (235 aa).

Substrate is bound by residues Asp10, Lys33, 60–69 (DLKMNDIPNT), Thr123, Arg185, Gln194, Gly214, and Arg215. Catalysis depends on Lys62, which acts as the Proton donor.

The protein belongs to the OMP decarboxylase family. Type 1 subfamily. Homodimer.

The catalysed reaction is orotidine 5'-phosphate + H(+) = UMP + CO2. The protein operates within pyrimidine metabolism; UMP biosynthesis via de novo pathway; UMP from orotate: step 2/2. Functionally, catalyzes the decarboxylation of orotidine 5'-monophosphate (OMP) to uridine 5'-monophosphate (UMP). In Lactobacillus johnsonii (strain CNCM I-12250 / La1 / NCC 533), this protein is Orotidine 5'-phosphate decarboxylase.